We begin with the raw amino-acid sequence, 196 residues long: MSVDEHLNQGTGEKQYRRRDLRNGLASRMGLGESTYRAREYGPSRRSRFRDRRDARPPPPTHQRVRFLNIPLDVSDYEIDDLLKDLPKPLYSKFYDHEDSRSAVFEFEDHSILDKCVELYNGLELHGAKITVEIFEQQGRFADSTRTNRSTDHVEKEAGFKTGRPRGKARATKKEKPPQPTLEDLDAELDAYMNGN.

Disordered stretches follow at residues 1-63 (MSVD…PTHQ) and 143-196 (DSTR…MNGN). The RRM domain occupies 63-137 (QRVRFLNIPL…AKITVEIFEQ (75 aa)). Over residues 149-159 (RSTDHVEKEAG) the composition is skewed to basic and acidic residues.

This sequence belongs to the YRA1 family. Associates with mRNPs.

The protein resides in the nucleus. Involved in export of poly(A) mRNAs from the nucleus. Recruited to the coding sequences as well as poly-A sites of active genes. The chain is RNA annealing protein YRA2 (YRA2) from Eremothecium gossypii (strain ATCC 10895 / CBS 109.51 / FGSC 9923 / NRRL Y-1056) (Yeast).